Here is an 89-residue protein sequence, read N- to C-terminus: MPIDTATKQKIIAEYATKEGDTGSPEVQVALLTHRINQLTEHLKEHKHDHHSRRGLLLLVGRRRRLLQYVAKKDINRYRRLIERLGLRR.

It belongs to the universal ribosomal protein uS15 family. As to quaternary structure, part of the 30S ribosomal subunit. Forms a bridge to the 50S subunit in the 70S ribosome, contacting the 23S rRNA.

Its function is as follows. One of the primary rRNA binding proteins, it binds directly to 16S rRNA where it helps nucleate assembly of the platform of the 30S subunit by binding and bridging several RNA helices of the 16S rRNA. In terms of biological role, forms an intersubunit bridge (bridge B4) with the 23S rRNA of the 50S subunit in the ribosome. The chain is Small ribosomal subunit protein uS15 from Thermobifida fusca (strain YX).